The chain runs to 299 residues: Ribonuclease H2 subunit A (299 aa).

Residue methionine 1 is modified to N-acetylmethionine. The region spanning 28 to 251 (PCVLGVDEAG…AQSILESEAE (224 aa)) is the RNase H type-2 domain. A divalent metal cation is bound by residues aspartate 34, glutamate 35, and aspartate 142. Phosphothreonine occurs at positions 205 and 217. The interval 250 to 272 (AEDVKWEDSETGDPKGPGKIKSY) is disordered. Serine 258 is subject to Phosphoserine.

The protein belongs to the RNase HII family. Eukaryotic subfamily. In terms of assembly, the RNase H2 complex is a heterotrimer composed of the catalytic subunit RNASEH2A and the non-catalytic subunits RNASEH2B and RNASEH2C. Requires Mn(2+) as cofactor. Mg(2+) is required as a cofactor.

Its subcellular location is the nucleus. The catalysed reaction is Endonucleolytic cleavage to 5'-phosphomonoester.. Its function is as follows. Catalytic subunit of RNase HII, an endonuclease that specifically degrades the RNA of RNA:DNA hybrids. Participates in DNA replication, possibly by mediating the removal of lagging-strand Okazaki fragment RNA primers during DNA replication. Mediates the excision of single ribonucleotides from DNA:RNA duplexes. In Bos taurus (Bovine), this protein is Ribonuclease H2 subunit A (RNASEH2A).